The primary structure comprises 491 residues: Probable succinate-semialdehyde dehydrogenase [NADP(+)] (491 aa).

Residues 163–164 (WN), 187–190 (KPAE), and 241–242 (GS) each bind NADP(+). Glutamate 263 functions as the Proton acceptor in the catalytic mechanism. Leucine 264 lines the NADP(+) pocket. Cysteine 297 serves as the catalytic Nucleophile. Residue glutamate 394 coordinates NADP(+).

It belongs to the aldehyde dehydrogenase family.

It carries out the reaction succinate semialdehyde + NADP(+) + H2O = succinate + NADPH + 2 H(+). It functions in the pathway amino-acid degradation; 4-aminobutanoate degradation. Functionally, catalyzes the NADP(+) dependent oxidation of succinate semialdehyde to succinate. The chain is Probable succinate-semialdehyde dehydrogenase [NADP(+)] (gabD) from Sinorhizobium fredii (strain NBRC 101917 / NGR234).